A 432-amino-acid polypeptide reads, in one-letter code: Serine hydroxymethyltransferase (432 aa).

(6S)-5,6,7,8-tetrahydrofolate-binding positions include Leu-127 and 131–133; that span reads GHL. Lys-236 carries the post-translational modification N6-(pyridoxal phosphate)lysine.

This sequence belongs to the SHMT family. As to quaternary structure, homodimer. It depends on pyridoxal 5'-phosphate as a cofactor.

It is found in the cytoplasm. It carries out the reaction (6R)-5,10-methylene-5,6,7,8-tetrahydrofolate + glycine + H2O = (6S)-5,6,7,8-tetrahydrofolate + L-serine. The protein operates within one-carbon metabolism; tetrahydrofolate interconversion. It functions in the pathway amino-acid biosynthesis; glycine biosynthesis; glycine from L-serine: step 1/1. Catalyzes the reversible interconversion of serine and glycine with tetrahydrofolate (THF) serving as the one-carbon carrier. This reaction serves as the major source of one-carbon groups required for the biosynthesis of purines, thymidylate, methionine, and other important biomolecules. Also exhibits THF-independent aldolase activity toward beta-hydroxyamino acids, producing glycine and aldehydes, via a retro-aldol mechanism. This chain is Serine hydroxymethyltransferase, found in Rhizobium johnstonii (strain DSM 114642 / LMG 32736 / 3841) (Rhizobium leguminosarum bv. viciae).